The following is a 214-amino-acid chain: Holliday junction branch migration complex subunit RuvA (214 aa).

Positions 1–63 are domain I; that stretch reads MISFLRGPVA…EDSMTLYGFA (63 aa). Positions 64–139 are domain II; sequence DPDEREVFEI…KLVPHGTVNG (76 aa). Residues 139–143 are flexible linker; the sequence is GAPAS. Positions 144–214 are domain III; sequence PSAQWKPQVV…SAGRQVTARG (71 aa).

It belongs to the RuvA family. Homotetramer. Forms an RuvA(8)-RuvB(12)-Holliday junction (HJ) complex. HJ DNA is sandwiched between 2 RuvA tetramers; dsDNA enters through RuvA and exits via RuvB. An RuvB hexamer assembles on each DNA strand where it exits the tetramer. Each RuvB hexamer is contacted by two RuvA subunits (via domain III) on 2 adjacent RuvB subunits; this complex drives branch migration. In the full resolvosome a probable DNA-RuvA(4)-RuvB(12)-RuvC(2) complex forms which resolves the HJ.

Its subcellular location is the cytoplasm. Its function is as follows. The RuvA-RuvB-RuvC complex processes Holliday junction (HJ) DNA during genetic recombination and DNA repair, while the RuvA-RuvB complex plays an important role in the rescue of blocked DNA replication forks via replication fork reversal (RFR). RuvA specifically binds to HJ cruciform DNA, conferring on it an open structure. The RuvB hexamer acts as an ATP-dependent pump, pulling dsDNA into and through the RuvAB complex. HJ branch migration allows RuvC to scan DNA until it finds its consensus sequence, where it cleaves and resolves the cruciform DNA. This Renibacterium salmoninarum (strain ATCC 33209 / DSM 20767 / JCM 11484 / NBRC 15589 / NCIMB 2235) protein is Holliday junction branch migration complex subunit RuvA.